Reading from the N-terminus, the 271-residue chain is Formamidopyrimidine-DNA glycosylase (271 aa).

Proline 2 acts as the Schiff-base intermediate with DNA in catalysis. Residue glutamate 3 is the Proton donor of the active site. Lysine 58 functions as the Proton donor; for beta-elimination activity in the catalytic mechanism. DNA-binding residues include histidine 91, arginine 110, and arginine 152. Residues 237-271 (RVYDRAGQPCRVCGEPIRCVRLGQRATYYCPRCQR) form an FPG-type zinc finger. The Proton donor; for delta-elimination activity role is filled by arginine 261.

The protein belongs to the FPG family. In terms of assembly, monomer. The cofactor is Zn(2+).

The catalysed reaction is Hydrolysis of DNA containing ring-opened 7-methylguanine residues, releasing 2,6-diamino-4-hydroxy-5-(N-methyl)formamidopyrimidine.. It catalyses the reaction 2'-deoxyribonucleotide-(2'-deoxyribose 5'-phosphate)-2'-deoxyribonucleotide-DNA = a 3'-end 2'-deoxyribonucleotide-(2,3-dehydro-2,3-deoxyribose 5'-phosphate)-DNA + a 5'-end 5'-phospho-2'-deoxyribonucleoside-DNA + H(+). In terms of biological role, involved in base excision repair of DNA damaged by oxidation or by mutagenic agents. Acts as a DNA glycosylase that recognizes and removes damaged bases. Has a preference for oxidized purines, such as 7,8-dihydro-8-oxoguanine (8-oxoG). Has AP (apurinic/apyrimidinic) lyase activity and introduces nicks in the DNA strand. Cleaves the DNA backbone by beta-delta elimination to generate a single-strand break at the site of the removed base with both 3'- and 5'-phosphates. This is Formamidopyrimidine-DNA glycosylase from Methylococcus capsulatus (strain ATCC 33009 / NCIMB 11132 / Bath).